The sequence spans 231 residues: Cuticle protein LPCP-23 (231 aa).

Residues 1–17 form the signal peptide; that stretch reads MAFKFVVFAAALAYANA. 2 tandem repeats follow at residues 130–133 and 199–202.

Component of the cuticle of Tenebrio molitor. The polypeptide is Cuticle protein LPCP-23 (LPCP-23) (Tenebrio molitor (Yellow mealworm beetle)).